Reading from the N-terminus, the 282-residue chain is Shikimate dehydrogenase (NADP(+)) (282 aa).

Shikimate-binding positions include 18–20 (SRS) and threonine 65. Catalysis depends on lysine 69, which acts as the Proton acceptor. Residue glutamate 81 participates in NADP(+) binding. The shikimate site is built by asparagine 90 and aspartate 105. Residues 130-134 (GAGGA), 154-159 (NRTPAR), and methionine 222 each bind NADP(+). Shikimate is bound at residue tyrosine 224. Residue glycine 245 coordinates NADP(+).

It belongs to the shikimate dehydrogenase family. Homodimer.

It carries out the reaction shikimate + NADP(+) = 3-dehydroshikimate + NADPH + H(+). Its pathway is metabolic intermediate biosynthesis; chorismate biosynthesis; chorismate from D-erythrose 4-phosphate and phosphoenolpyruvate: step 4/7. Involved in the biosynthesis of the chorismate, which leads to the biosynthesis of aromatic amino acids. Catalyzes the reversible NADPH linked reduction of 3-dehydroshikimate (DHSA) to yield shikimate (SA). This chain is Shikimate dehydrogenase (NADP(+)), found in Acidovorax sp. (strain JS42).